Here is a 314-residue protein sequence, read N- to C-terminus: Formate-nitrite transporter (314 aa).

The Cytoplasmic portion of the chain corresponds to 1 to 47 (MQKSTSKYVIDPISIKTNCSSEESYIRCVEYGKGKAHYRNLILLAKA). Residues 48-68 (ILAGVFVGVCAHASGIAGGLF) form a helical membrane-spanning segment. Residues 69–77 (YYHKLREYV) are Extracellular-facing. A helical membrane pass occupies residues 78–98 (GISMSAFVYGFTFPIAFLCII). The Cytoplasmic segment spans residues 99-128 (CTGSDLFTGNTLAVTTALLQKKLGLLCYMR). Residues 129 to 149 (VMCISLVGNYIGAVAFAFFVS) form a helical membrane-spanning segment. At 150-185 (YGSGAFSINTDTSKNHIFQFLNDIAIKKVSHSFIEC) the chain is on the extracellular side. The helical transmembrane segment at 186-206 (ICLAIGCNIFVCLAVYFVLSI) threads the bilayer. Residues 207 to 211 (KDGSG) are Cytoplasmic-facing. The helical transmembrane segment at 212–232 (LVFSVFFAVYAFAIAGYEHII) threads the bilayer. Over 233-260 (ANIYTLNLALMISNDISFTQVYFKNLLP) the chain is Extracellular. Residues 261-281 (TLIGNYIAGGLVLAFPLFFIY) traverse the membrane as a helical segment. At 282–314 (RSCYYDYDKMNDELNTVVLKTLSLELQNESNHI) the chain is on the cytoplasmic side.

This sequence belongs to the FNT transporter (TC 1.A.16) family. In terms of assembly, homopentamer.

It is found in the cell membrane. Its subcellular location is the vacuole membrane. The enzyme catalyses (S)-lactate(in) + H(+)(in) = (S)-lactate(out) + H(+)(out). It catalyses the reaction formate(in) + H(+)(in) = formate(out) + H(+)(out). It carries out the reaction pyruvate(out) + H(+)(out) = pyruvate(in) + H(+)(in). The catalysed reaction is acetate(out) + H(+)(out) = acetate(in) + H(+)(in). Inhibited by the Malaria Box compound MMV007839 and its derivatives BH296 and BH267.meta. Its function is as follows. Monocarboxylate-proton symporter that mediates the efflux of the waste product lactate in the intraerythrocytic parasites; active in acidic-to-neutral pH range. Transports L-lactate. The chain is Formate-nitrite transporter from Plasmodium malariae.